Reading from the N-terminus, the 379-residue chain is Stimulator of interferon genes protein (379 aa).

Topologically, residues 1 to 17 are cytoplasmic; the sequence is MPYSNLHPSIPRPRSYR. Residues 1-190 form a mediates interaction with ZDHHC1 and ZDHHC11 region; that stretch reads MPYSNLHPSI…MFNQLHNNML (190 aa). The chain crosses the membrane as a helical span at residues 18-34; it reads FKLAAFVLLVGSLMSLW. Topologically, residues 35–44 are lumenal; sequence MTGEPPSHTL. The helical transmembrane segment at 45 to 69 threads the bilayer; it reads HYLALHVASQQLGLLLKKLCCLAEE. Residues 70–91 are Cytoplasmic-facing; it reads LCHVQSRYQGSYWKAVRACVGS. The S-palmitoyl cysteine moiety is linked to residue C88. A helical transmembrane segment spans residues 92-106; the sequence is PICFMALILLSFYFY. Residues 107–116 lie on the Lumenal side of the membrane; sequence CSLENTSDLR. The helical transmembrane segment at 117-134 threads the bilayer; it reads LAWHLGILVLSKSLSMTL. Over 135–379 the chain is Cytoplasmic; the sequence is DLQSLAPAEV…QPLPLRTDLI (245 aa). K151 is covalently cross-linked (Glycyl lysine isopeptide (Lys-Gly) (interchain with G-Cter in ubiquitin)). Positions 153 to 340 are cyclic dinucleotide-binding domain (CBD); that stretch reads FNVAHGLAWS…RHIRQEEKEE (188 aa). 162–167 provides a ligand contact to 2',3'-cGAMP; it reads SYYIGY. G166 is a binding site for 3',3'-c-di-GMP. 2',3'-cUAMP is bound at residue Y167. A Glycyl lysine isopeptide (Lys-Gly) (interchain with G-Cter in ubiquitin) cross-link involves residue K236. R238 serves as a coordination point for 2',3'-cUAMP. 2',3'-cGAMP-binding positions include 238–241 and T263; that span reads RAYS. 3',3'-c-di-GMP is bound by residues 238–241 and T263; that span reads RAYS. Position 241 is a phosphoserine (S241). T263 provides a ligand contact to 2',3'-cUAMP. Residue K338 forms a Glycyl lysine isopeptide (Lys-Gly) (interchain with G-Cter in SUMO) linkage. Positions 340-379 are C-terminal tail (CTT); the sequence is EVTMSGPPTSVAPRPSLLSQEPRLLISGMEQPLPLRTDLI. A Phosphoserine modification is found at S355. S358 and S366 each carry phosphoserine; by TBK1. A pLxIS motif motif is present at residues 363-366; that stretch reads LLIS.

This sequence belongs to the STING family. In terms of assembly, homodimer; forms a homodimer in absence of cyclic nucleotide (c-di-GMP or cGAMP); 'Lys-63'-linked ubiquitination at Lys-151 is required for homodimerization. Homotetramer; in presence of cyclic nucleotide (c-di-GMP or cGAMP), forms tetramers and higher-order oligomers through side-by-side packing. Interacts (when phosphorylated) with IRF3; following activation and phosphorylation on the pLxIS motif by TBK1, recruits IRF3. Interacts with RIGI, MAVS and SSR2. Interacts with RNF5 and TRIM56. Interacts with TBK1; when homodimer, leading to subsequent production of IFN-beta. Interacts with IFIT1 and IFIT2. Interacts with TRIM29; this interaction induces STING1 ubiquitination and subsequent degradation. Associates with the MHC-II complex. Interacts with STEEP1; interaction takes place upon cGAMP-activation and STING1 phosphorylation by MAP3K7/TAK1 and promotes STING1 translocation to COPII vesicles. Interacts with SEC24A, SEC24B and SEC24C; promoting translocation to COPII vesicles. Interacts (when ubiquitinated) with SQSTM1; leading to relocalization to autophagosomes. Interacts with SURF4. Interacts with HNRNPA2B1. Interacts with ZDHHC1; ZDHHC1 constitutively interacts with STING1 and in presence of DNA viruses activates it by promoting its cGAMP-induced oligomerization and the recruitment of downstream signaling components. Interacts with ZDHHC11; in presence of DNA viruses promotes the recruitment of IRF3 to STING1. Interacts with TOMM70. Interacts with TAB1; promoting recruitment of TAB1 to the endoplasmic reticulum membrane and subsequent activation of MAP3K7/TAK1. Interacts (via transmembrane domain) with TMEM203. Interacts with DDX41. Phosphorylation by TBK1 leads to activation and production of IFN-beta. Following cyclic nucleotide (c-di-GMP or cGAMP)-binding, activation and translocation from the endoplasmic reticulum, STING1 is phosphorylated by TBK1 at Ser-366 in the pLxIS motif. The phosphorylated pLxIS motif constitutes an IRF3-binding motif, leading to recruitment of the transcription factor IRF3 to induce type-I interferons and other cytokines. Phosphorylated on tyrosine residues upon MHC-II aggregation. Dephosphorylation by PPP6C leads to inactivation and decreased production of IFN-beta. Phosphorylation at Ser-358 is also required to activate IRF3. Phosphorylation at Ser-355 by MAP3K7/TAK1 facilitates its interaction with STEEP1, promoting STING1 translocation to COPII vesicles. In terms of processing, ubiquitinated. Ubiquitinated via 'Lys-63'-linked ubiquitin chains in response to double-stranded DNA treatment, leading to relocalization to autophagosomes and subsequent degradation; this process is dependent on SQSTM1. 'Lys-63'-linked ubiquitination mediated by TRIM56 at Lys-151 promotes homodimerization and recruitment of the antiviral kinase TBK1 and subsequent production of IFN-beta. 'Lys-48'-linked polyubiquitination at Lys-151 occurring after viral infection is mediated by RNF5 and leads to proteasomal degradation. 'Lys-11'-linked polyubiquitination at Lys-151 by RNF26 leads to stabilize STING1: it protects STING1 from RNF5-mediated 'Lys-48'-linked polyubiquitination. 'Lys-33'-linked and 'Lys-48'-linked deubiquitinated by USP20; leading to its stabilization and promotion of innate antiviral response. 'Lys-48'-linked deubiquitinated by USP44; leading to its stabilization and promotion of innate antiviral response. Deubiquitinated by USP13; leading to inhibition of innate antiviral response. 'Lys-63'-linked deubiquitinated by USP49; leading to inhibition of the subsequent recruitment of TBK1 to the signaling complex. 'Lys-63'-linked ubiquitination mediated by RNF39 promotes the activation of the cGAS-STING pathway. Post-translationally, sumoylated at Lys-338 by TRIM38 during the early phase of viral infection, promoting its stability by preventing its relocalization to autophagosomes and subsequent degradation. Desumoylated by SENP2 during the late phase of viral infection. Palmitoylation takes place in the Golgi apparatus and creates a platform for the recruitment of TBK1.

The protein localises to the endoplasmic reticulum membrane. Its subcellular location is the cytoplasm. It is found in the perinuclear region. The protein resides in the endoplasmic reticulum-Golgi intermediate compartment membrane. It localises to the golgi apparatus membrane. The protein localises to the cytoplasmic vesicle. Its subcellular location is the autophagosome membrane. It is found in the mitochondrion outer membrane. The protein resides in the cell membrane. It catalyses the reaction H(+)(in) = H(+)(out). Its activity is regulated as follows. In contrast to mouse protein, not activated by anticancer molecule 5,6-dimethylxanthenone 4-acetic acid (DMXAA). Facilitator of innate immune signaling that acts as a sensor of cytosolic DNA from bacteria and viruses and promotes the production of type I interferon (IFN-alpha and IFN-beta). Innate immune response is triggered in response to non-CpG double-stranded DNA from viruses and bacteria delivered to the cytoplasm. Acts by binding cyclic dinucleotides: recognizes and binds cyclic di-GMP (c-di-GMP), a second messenger produced by bacteria, cyclic UMP-AMP (2',3'-cUAMP), and cyclic GMP-AMP (cGAMP), a messenger produced by CGAS in response to DNA virus in the cytosol. Upon binding to c-di-GMP, cUAMP or cGAMP, STING1 oligomerizes, translocates from the endoplasmic reticulum and is phosphorylated by TBK1 on the pLxIS motif, leading to recruitment and subsequent activation of the transcription factor IRF3 to induce expression of type I interferon and exert a potent anti-viral state. Exhibits 2',3' phosphodiester linkage-specific ligand recognition: can bind both 2'-3' linked cGAMP (2'-3'-cGAMP) and 3'-3' linked cGAMP but is preferentially activated by 2'-3' linked cGAMP. The preference for 2'-3'-cGAMP, compared to other linkage isomers is probably due to the ligand itself, whichs adopts an organized free-ligand conformation that resembles the STING1-bound conformation and pays low energy costs in changing into the active conformation. In addition to promote the production of type I interferons, plays a direct role in autophagy. Following cGAMP-binding, STING1 buds from the endoplasmic reticulum into COPII vesicles, which then form the endoplasmic reticulum-Golgi intermediate compartment (ERGIC). The ERGIC serves as the membrane source for WIPI2 recruitment and LC3 lipidation, leading to formation of autophagosomes that target cytosolic DNA or DNA viruses for degradation by the lysosome. Promotes autophagy by acting as a proton channel that directs proton efflux from the Golgi to facilitate MAP1LC3B/LC3B lipidation. The autophagy- and interferon-inducing activities can be uncoupled and autophagy induction is independent of TBK1 phosphorylation. Autophagy is also triggered upon infection by bacteria: following c-di-GMP-binding, which is produced by live Gram-positive bacteria, promotes reticulophagy. May be involved in translocon function, the translocon possibly being able to influence the induction of type I interferons. May be involved in transduction of apoptotic signals via its association with the major histocompatibility complex class II (MHC-II). This Rattus norvegicus (Rat) protein is Stimulator of interferon genes protein.